A 262-amino-acid polypeptide reads, in one-letter code: Ribose-5-phosphate isomerase A (262 aa).

Substrate is bound by residues 33-36 (TGST), 89-92 (DGAD), and 102-105 (KGGG). Residue Glu111 is the Proton acceptor of the active site. Substrate is bound at residue Lys129.

This sequence belongs to the ribose 5-phosphate isomerase family. As to quaternary structure, homodimer.

The catalysed reaction is aldehydo-D-ribose 5-phosphate = D-ribulose 5-phosphate. The protein operates within carbohydrate degradation; pentose phosphate pathway; D-ribose 5-phosphate from D-ribulose 5-phosphate (non-oxidative stage): step 1/1. Functionally, catalyzes the reversible conversion of ribose-5-phosphate to ribulose 5-phosphate. The protein is Ribose-5-phosphate isomerase A of Cereibacter sphaeroides (strain ATCC 17029 / ATH 2.4.9) (Rhodobacter sphaeroides).